A 339-amino-acid polypeptide reads, in one-letter code: Phenylalanine--tRNA ligase alpha subunit (339 aa).

E254 provides a ligand contact to Mg(2+).

The protein belongs to the class-II aminoacyl-tRNA synthetase family. Phe-tRNA synthetase alpha subunit type 1 subfamily. Tetramer of two alpha and two beta subunits. Mg(2+) is required as a cofactor.

It is found in the cytoplasm. The catalysed reaction is tRNA(Phe) + L-phenylalanine + ATP = L-phenylalanyl-tRNA(Phe) + AMP + diphosphate + H(+). This chain is Phenylalanine--tRNA ligase alpha subunit, found in Acetivibrio thermocellus (strain ATCC 27405 / DSM 1237 / JCM 9322 / NBRC 103400 / NCIMB 10682 / NRRL B-4536 / VPI 7372) (Clostridium thermocellum).